The following is a 356-amino-acid chain: Protein-arginine kinase (356 aa).

One can recognise a Phosphagen kinase C-terminal domain in the interval 24-254; it reads IVLSSRIRLA…MQLIQQERAA (231 aa). Residues 27-31, histidine 91, arginine 125, 176-180, and 207-212 each bind ATP; these read SSRIR, RASVM, and RGIYGE. The RDXXRA motif of the pArg binding pocket involved in allosteric regulation motif lies at 337 to 342; it reads RDERRA.

Belongs to the ATP:guanido phosphotransferase family.

The catalysed reaction is L-arginyl-[protein] + ATP = N(omega)-phospho-L-arginyl-[protein] + ADP + H(+). With respect to regulation, appears to be allosterically activated by the binding of pArg-containing polypeptides to the pArg-binding pocket localized in the C-terminal domain of McsB. Catalyzes the specific phosphorylation of arginine residues in a large number of proteins. Is part of the bacterial stress response system. Protein arginine phosphorylation has a physiologically important role and is involved in the regulation of many critical cellular processes, such as protein homeostasis, motility, competence, and stringent and stress responses, by regulating gene expression and protein activity. The protein is Protein-arginine kinase of Halalkalibacterium halodurans (strain ATCC BAA-125 / DSM 18197 / FERM 7344 / JCM 9153 / C-125) (Bacillus halodurans).